The chain runs to 67 residues: Prokaryotic ubiquitin-like protein Pup (67 aa).

The segment covering 1–13 has biased composition (low complexity); it reads MAGQEQQQPQSRD. The segment at 1 to 48 is disordered; sequence MAGQEQQQPQSRDSQVDEDIPEAPPAPPEAQASASTEGVDDLLDEIDG. An ARC ATPase binding region spans residues 25–61; sequence PAPPEAQASASTEGVDDLLDEIDGVLESNAEEFVRAF. Residues 38-48 show a composition bias toward acidic residues; that stretch reads GVDDLLDEIDG. Position 67 is a deamidated glutamine (glutamine 67). Residue glutamine 67 forms an Isoglutamyl lysine isopeptide (Gln-Lys) (interchain with K-? in acceptor proteins) linkage.

The protein belongs to the prokaryotic ubiquitin-like protein family. As to quaternary structure, strongly interacts with the proteasome-associated ATPase ARC through a hydrophobic interface; the interacting region of Pup lies in its C-terminal half. There is one Pup binding site per ARC hexamer ring. Post-translationally, is modified by deamidation of its C-terminal glutamine to glutamate by the deamidase Dop, a prerequisite to the subsequent pupylation process.

It functions in the pathway protein degradation; proteasomal Pup-dependent pathway. Functionally, protein modifier that is covalently attached to lysine residues of substrate proteins, thereby targeting them for proteasomal degradation. The tagging system is termed pupylation. The sequence is that of Prokaryotic ubiquitin-like protein Pup from Pseudarthrobacter chlorophenolicus (strain ATCC 700700 / DSM 12829 / CIP 107037 / JCM 12360 / KCTC 9906 / NCIMB 13794 / A6) (Arthrobacter chlorophenolicus).